A 78-amino-acid polypeptide reads, in one-letter code: Small ribosomal subunit protein bS20 (78 aa).

Belongs to the bacterial ribosomal protein bS20 family.

Binds directly to 16S ribosomal RNA. This is Small ribosomal subunit protein bS20 from Streptococcus thermophilus (strain ATCC BAA-491 / LMD-9).